A 430-amino-acid polypeptide reads, in one-letter code: Adenylosuccinate synthetase (430 aa).

Residues 17–23 (GDEGKGK) and 45–47 (GHT) contribute to the GTP site. The Proton acceptor role is filled by Asp-18. Mg(2+) is bound by residues Asp-18 and Gly-45. IMP contacts are provided by residues 18 to 21 (DEGK), 43 to 46 (NAGH), Thr-139, Arg-153, Asn-229, Thr-244, and Arg-308. The Proton donor role is filled by His-46. 304–310 (TVTGRRR) is a substrate binding site. Residues Arg-310, 336–338 (KLD), and 418–420 (GVG) each bind GTP.

This sequence belongs to the adenylosuccinate synthetase family. Homodimer. Mg(2+) serves as cofactor.

It is found in the cytoplasm. The enzyme catalyses IMP + L-aspartate + GTP = N(6)-(1,2-dicarboxyethyl)-AMP + GDP + phosphate + 2 H(+). Its pathway is purine metabolism; AMP biosynthesis via de novo pathway; AMP from IMP: step 1/2. Its function is as follows. Plays an important role in the de novo pathway and in the salvage pathway of purine nucleotide biosynthesis. Catalyzes the first committed step in the biosynthesis of AMP from IMP. The polypeptide is Adenylosuccinate synthetase (Cryptococcus neoformans var. neoformans serotype D (strain JEC21 / ATCC MYA-565) (Filobasidiella neoformans)).